The chain runs to 63 residues: Conotoxin p5a (63 aa).

The first 19 residues, 1–19, serve as a signal peptide directing secretion; the sequence is MRCLPVFVILLLLIPSAPC. Residues 20–50 constitute a propeptide that is removed on maturation; that stretch reads VDAHPKTKDDMPLASFHDNAKGTLQRFWKKR. Disulfide bonds link Cys-52/Cys-59 and Cys-53/Cys-60. Leu-62 carries the leucine amide modification.

As to expression, expressed by the venom duct.

The protein resides in the secreted. In terms of biological role, in vivo, low levels of the peptide injected into male specimens of the Siamese fighting fish causes an immediate aggressive display in this fish in response to their reflection when placed in a mirrored aquarium; High levels of the peptide suppressed this behavior. No effect is observed when injected into mice. The chain is Conotoxin p5a from Conus purpurascens (Purple cone).